The chain runs to 86 residues: Small ribosomal subunit protein bS18 (86 aa).

Belongs to the bacterial ribosomal protein bS18 family. Part of the 30S ribosomal subunit. Forms a tight heterodimer with protein bS6.

Its function is as follows. Binds as a heterodimer with protein bS6 to the central domain of the 16S rRNA, where it helps stabilize the platform of the 30S subunit. This is Small ribosomal subunit protein bS18 from Herpetosiphon aurantiacus (strain ATCC 23779 / DSM 785 / 114-95).